The chain runs to 495 residues: ATP synthase subunit beta (495 aa).

178 to 185 serves as a coordination point for ATP; the sequence is GGAGVGKT.

This sequence belongs to the ATPase alpha/beta chains family. As to quaternary structure, F-type ATPases have 2 components, CF(1) - the catalytic core - and CF(0) - the membrane proton channel. CF(1) has five subunits: alpha(3), beta(3), gamma(1), delta(1), epsilon(1). CF(0) has three main subunits: a(1), b(2) and c(9-12). The alpha and beta chains form an alternating ring which encloses part of the gamma chain. CF(1) is attached to CF(0) by a central stalk formed by the gamma and epsilon chains, while a peripheral stalk is formed by the delta and b chains.

It localises to the cell membrane. The enzyme catalyses ATP + H2O + 4 H(+)(in) = ADP + phosphate + 5 H(+)(out). Its function is as follows. Produces ATP from ADP in the presence of a proton gradient across the membrane. The catalytic sites are hosted primarily by the beta subunits. The polypeptide is ATP synthase subunit beta (Bifidobacterium animalis subsp. lactis (strain AD011)).